The chain runs to 260 residues: MTDHIVKKAQECLPNIPLTVISQGAEALVFYTDVHPYANEPYLQNRGKYVIKYRPSKPYRHPKVDSSITKSRTVGEVKFMYKLNKLNINSPRIISADYNNGIIWMEYIGYSLPNGDVSSFKNWLWYLERNNQDCTSESVEKMCFKVGQLIGKLHLHEMIHGDLTSSNILLNDDEPVLIDFGLSSYSGLAEDRAVDLYVLERAITSTHSVYAKEYNQWLLQGYEDVHKHKEFGKQGQKKLVEVLKKLDDVRLRGRKRSMLG.

A Protein kinase domain is found at 15–260 (NIPLTVISQG…LRGRKRSMLG (246 aa)). ATP is bound by residues 21 to 29 (ISQGAEALV) and Lys-52. Asp-162 acts as the Proton acceptor in catalysis.

The protein belongs to the protein kinase superfamily. BUD32 family. In terms of assembly, component of the EKC/KEOPS complex composed of at least BUD32, CGI121, GON7, KAE1 and PCC1; the whole complex dimerizes.

It localises to the cytoplasm. It is found in the nucleus. Its subcellular location is the chromosome. The protein localises to the telomere. The enzyme catalyses L-seryl-[protein] + ATP = O-phospho-L-seryl-[protein] + ADP + H(+). It carries out the reaction L-threonyl-[protein] + ATP = O-phospho-L-threonyl-[protein] + ADP + H(+). Component of the EKC/KEOPS complex that is required for the formation of a threonylcarbamoyl group on adenosine at position 37 (t(6)A37) in tRNAs that read codons beginning with adenine. The complex is probably involved in the transfer of the threonylcarbamoyl moiety of threonylcarbamoyl-AMP (TC-AMP) to the N6 group of A37. BUD32 has ATPase activity in the context of the EKC/KEOPS complex and likely plays a supporting role to the catalytic subunit KAE1. The EKC/KEOPS complex also promotes both telomere uncapping and telomere elongation. The complex is required for efficient recruitment of transcriptional coactivators. The protein is EKC/KEOPS complex subunit BUD32 (BUD32) of Debaryomyces hansenii (strain ATCC 36239 / CBS 767 / BCRC 21394 / JCM 1990 / NBRC 0083 / IGC 2968) (Yeast).